A 381-amino-acid polypeptide reads, in one-letter code: Cytochrome b (381 aa).

The next 4 membrane-spanning stretches (helical) occupy residues 34–54 (FGSLLGLCLVIQIVTGLFLAM), 78–99 (WLIRNIHANGASLFFVCIYFHI), 114–134 (WNIGVILLFLLMATAFVGYVL), and 179–199 (FFAFHFLLPFLITALMIIHIL). Positions 84 and 98 each coordinate heme b. Residues histidine 183 and histidine 197 each contribute to the heme b site. Histidine 202 provides a ligand contact to a ubiquinone. 4 helical membrane passes run 227–247 (YKDALGFLSLLILLGILALFL), 289–309 (LGGVLALLFSILILMLVPFLH), 321–341 (LTQVFFWILVANMLVLTWIGG), and 348–368 (FILIGQIASISYFSLFLIAIP).

Belongs to the cytochrome b family. In terms of assembly, the cytochrome bc1 complex contains 3 respiratory subunits (MT-CYB, CYC1 and UQCRFS1), 2 core proteins (UQCRC1 and UQCRC2) and probably 6 low-molecular weight proteins. It depends on heme b as a cofactor.

It is found in the mitochondrion inner membrane. Its function is as follows. Component of the ubiquinol-cytochrome c reductase complex (complex III or cytochrome b-c1 complex) that is part of the mitochondrial respiratory chain. The b-c1 complex mediates electron transfer from ubiquinol to cytochrome c. Contributes to the generation of a proton gradient across the mitochondrial membrane that is then used for ATP synthesis. This chain is Cytochrome b (mt-cyb), found in Carcharodon carcharias (Great white shark).